The primary structure comprises 156 residues: SsrA-binding protein (156 aa).

The protein belongs to the SmpB family.

It localises to the cytoplasm. Required for rescue of stalled ribosomes mediated by trans-translation. Binds to transfer-messenger RNA (tmRNA), required for stable association of tmRNA with ribosomes. tmRNA and SmpB together mimic tRNA shape, replacing the anticodon stem-loop with SmpB. tmRNA is encoded by the ssrA gene; the 2 termini fold to resemble tRNA(Ala) and it encodes a 'tag peptide', a short internal open reading frame. During trans-translation Ala-aminoacylated tmRNA acts like a tRNA, entering the A-site of stalled ribosomes, displacing the stalled mRNA. The ribosome then switches to translate the ORF on the tmRNA; the nascent peptide is terminated with the 'tag peptide' encoded by the tmRNA and targeted for degradation. The ribosome is freed to recommence translation, which seems to be the essential function of trans-translation. The chain is SsrA-binding protein from Clostridium botulinum (strain Alaska E43 / Type E3).